A 372-amino-acid polypeptide reads, in one-letter code: MQQTFIPVPLPQQPYQIAIASGGLTQLGSWLQDRSLQSVKLGQKVLVVSNPQIWKHYGEIVQDSLAQAGFQVEHFLLPAGERYKTPRSIQKIYDYALDLKLERSSTLVALGGGVIGDMTGFAAATWLRGINFVQVPTSLLAMVDASIGGKTGVNHPKGKNLIGAFYQPRLVLIDPDTLKTLASREFRAGMAEVIKYGVIWDLELFEVLEGCDRTNQYRYMPPHILTEILTRSAQAKADVVTQDEKEAGLRAILNYGHTIGHAIESLTGYRLFNHGEAVALGMVAAADIAVQLDWWSVEDAQRQHQLIQKTGLPTELPADFAIEAVADVLLTDKKVKDGKVRFILPTQLGKIDITDQVPGQVIVSALKGMIGQ.

NAD(+) contacts are provided by residues 113–117, 137–138, lysine 150, lysine 159, and 177–180; these read GVIGD, TS, and TLKT. Residues glutamate 192, histidine 257, and histidine 274 each contribute to the Zn(2+) site.

The protein belongs to the sugar phosphate cyclases superfamily. Dehydroquinate synthase family. Co(2+) is required as a cofactor. Zn(2+) serves as cofactor. It depends on NAD(+) as a cofactor.

The protein resides in the cytoplasm. It carries out the reaction 7-phospho-2-dehydro-3-deoxy-D-arabino-heptonate = 3-dehydroquinate + phosphate. It functions in the pathway metabolic intermediate biosynthesis; chorismate biosynthesis; chorismate from D-erythrose 4-phosphate and phosphoenolpyruvate: step 2/7. In terms of biological role, catalyzes the conversion of 3-deoxy-D-arabino-heptulosonate 7-phosphate (DAHP) to dehydroquinate (DHQ). This chain is 3-dehydroquinate synthase, found in Acaryochloris marina (strain MBIC 11017).